The primary structure comprises 128 residues: Large ribosomal subunit protein bL17 (128 aa).

This sequence belongs to the bacterial ribosomal protein bL17 family. Part of the 50S ribosomal subunit. Contacts protein L32.

The polypeptide is Large ribosomal subunit protein bL17 (Glaesserella parasuis serovar 5 (strain SH0165) (Haemophilus parasuis)).